Consider the following 524-residue polypeptide: Bifunctional purine biosynthesis protein PurH (524 aa).

The MGS-like domain occupies Met1–Cys154.

It belongs to the PurH family.

It catalyses the reaction (6R)-10-formyltetrahydrofolate + 5-amino-1-(5-phospho-beta-D-ribosyl)imidazole-4-carboxamide = 5-formamido-1-(5-phospho-D-ribosyl)imidazole-4-carboxamide + (6S)-5,6,7,8-tetrahydrofolate. The catalysed reaction is IMP + H2O = 5-formamido-1-(5-phospho-D-ribosyl)imidazole-4-carboxamide. The protein operates within purine metabolism; IMP biosynthesis via de novo pathway; 5-formamido-1-(5-phospho-D-ribosyl)imidazole-4-carboxamide from 5-amino-1-(5-phospho-D-ribosyl)imidazole-4-carboxamide (10-formyl THF route): step 1/1. Its pathway is purine metabolism; IMP biosynthesis via de novo pathway; IMP from 5-formamido-1-(5-phospho-D-ribosyl)imidazole-4-carboxamide: step 1/1. The chain is Bifunctional purine biosynthesis protein PurH from Acaryochloris marina (strain MBIC 11017).